Here is a 421-residue protein sequence, read N- to C-terminus: MFIDNVSAIEVMDSRGNPTVKTTVELSDGTKESAIVPSGASTGKREALELRDGGSRYMGKGVLKAVENVNAQISDALIGLSPFNQAVIDATMKELDGTDNYGNLGANAVLGVSMAVARAAAKSLGIPLYRYLGGANAMVIPTPMLNIINGGSHADNSVDFQEYMIMPVGFEDFATSLQASAEVYHNLKAILKSKKHNTALGDEGGFAPDLSSNEEPIQIIMQAIEKAGYKAGEQMAIALDVAASELVSDGGYRLDSENRTVTSAELVDYYVDLCNKYPIVSIEDGLSEDDWDGWKLLTEKLGDRVQLVGDDLFVTNATILNEGIKKGIANSILIKPNQIGSVSETMQTVRLAQRNGYKCVMSHRSGESEDAFIADFAVALNCGEIKTGSTARGERTAKYNRLLEIENEVVYGEYLGSELFN.

Gln161 is a binding site for (2R)-2-phosphoglycerate. Glu203 serves as the catalytic Proton donor. Residues Asp240, Glu283, and Asp310 each coordinate Mg(2+). Residues Lys335, Arg364, Ser365, and Lys386 each coordinate (2R)-2-phosphoglycerate. Catalysis depends on Lys335, which acts as the Proton acceptor.

This sequence belongs to the enolase family. Mg(2+) serves as cofactor.

The protein localises to the cytoplasm. The protein resides in the secreted. It localises to the cell surface. The enzyme catalyses (2R)-2-phosphoglycerate = phosphoenolpyruvate + H2O. The protein operates within carbohydrate degradation; glycolysis; pyruvate from D-glyceraldehyde 3-phosphate: step 4/5. Catalyzes the reversible conversion of 2-phosphoglycerate (2-PG) into phosphoenolpyruvate (PEP). It is essential for the degradation of carbohydrates via glycolysis. The sequence is that of Enolase from Sulfurimonas denitrificans (strain ATCC 33889 / DSM 1251) (Thiomicrospira denitrificans (strain ATCC 33889 / DSM 1251)).